A 266-amino-acid chain; its full sequence is METFQIILLALIQGLTEFLPISSSAHLILPSQLLGWKDQGFSFDVAVNTGSLLAVVIYFRHDLWTMAKAWVLSLVKGEQSNESKLAWWIILATIPAVIFGFAAKDFIATHLRNTTVIASTTIIFGLLLWWADRMSRSELTVYQTGWRKALLIGFAQALAIIPGTSRSGATMTAALMLGLSREAAAKFSFLMSVPVGLGAAILVTKDLVESPEAIDYQALGIGMLVSFLAAYACIYYFLKYISRMGMTPFVIYRLILGSVLFALILW.

The next 8 helical transmembrane spans lie at 1–21 (METF…FLPI), 39–59 (QGFS…VIYF), 87–107 (WWII…KDFI), 111–131 (LRNT…LWWA), 149–169 (ALLI…RSGA), 183–203 (AAAK…AILV), 218–238 (ALGI…YYFL), and 246–266 (MTPF…LILW).

It belongs to the UppP family.

It localises to the cell inner membrane. It carries out the reaction di-trans,octa-cis-undecaprenyl diphosphate + H2O = di-trans,octa-cis-undecaprenyl phosphate + phosphate + H(+). Catalyzes the dephosphorylation of undecaprenyl diphosphate (UPP). Confers resistance to bacitracin. The polypeptide is Undecaprenyl-diphosphatase (Shewanella denitrificans (strain OS217 / ATCC BAA-1090 / DSM 15013)).